We begin with the raw amino-acid sequence, 560 residues long: Probable methionine--tRNA ligase, cytoplasmic (560 aa).

A 'HIGH' region motif is present at residues 16–26 (PYVNNQPHLGN). Residues 347-351 (KFSKS) carry the 'KMSKS' region motif. Lys-350 provides a ligand contact to ATP.

The protein belongs to the class-I aminoacyl-tRNA synthetase family.

It localises to the cytoplasm. It catalyses the reaction tRNA(Met) + L-methionine + ATP = L-methionyl-tRNA(Met) + AMP + diphosphate. This is Probable methionine--tRNA ligase, cytoplasmic from Vairimorpha ceranae (strain BRL01) (Microsporidian parasite).